Consider the following 255-residue polypeptide: Biotin carboxyl carrier protein of acetyl-CoA carboxylase 2, chloroplastic (255 aa).

A chloroplast-targeting transit peptide spans 1 to 87; it reads MASLSVPCVK…TNVPEPAELS (87 aa). The interval 148 to 193 is disordered; sequence PPAQPVALPPSPTPTSTPATAKPTSAPSSSHPPLKSPMAGTFYRSP. Over residues 149–162 the composition is skewed to pro residues; the sequence is PAQPVALPPSPTPT. Positions 163–180 are enriched in low complexity; it reads STPATAKPTSAPSSSHPP. The region spanning 178-254 is the Biotinyl-binding domain; the sequence is HPPLKSPMAG…SVDTPLFVIA (77 aa). Position 220 is an N6-biotinyllysine (Lys-220).

As to quaternary structure, acetyl-CoA carboxylase is a heterohexamer composed of biotin carboxyl carrier protein, biotin carboxylase and 2 subunits each of ACCase subunit alpha and ACCase plastid-coded subunit beta (accD). In terms of tissue distribution, primarily expressed in 7 to 10 days after flowering seeds at levels approximately 2-fold less abundant than BCCP1.

It localises to the plastid. Its subcellular location is the chloroplast. The protein operates within lipid metabolism; fatty acid biosynthesis. This protein is a component of the acetyl coenzyme A carboxylase complex; first, biotin carboxylase catalyzes the carboxylation of the carrier protein and then the transcarboxylase transfers the carboxyl group to form malonyl-CoA. The sequence is that of Biotin carboxyl carrier protein of acetyl-CoA carboxylase 2, chloroplastic (BCCP2) from Arabidopsis thaliana (Mouse-ear cress).